The sequence spans 116 residues: Antimicrobial peptide 1b (116 aa).

The first 34 residues, 1 to 34 (MKPHMSATVLRAPRVAAILLAVVLAAVLATAVNG), serve as a signal peptide directing secretion. The Chitin-binding type-1 domain maps to 35–77 (AQRCGDQARGAKCPNCLCCGKYGFCGSGDAYCGAGSCQSQCRG). 5 disulfide bridges follow: Cys38/Cys53, Cys47/Cys59, Cys50/Cys78, Cys52/Cys66, and Cys71/Cys75. The propeptide occupies 80-116 (DDVVGQALPAEPGSTRATAASSASARGLNLTATTGGP). Positions 89-116 (AEPGSTRATAASSASARGLNLTATTGGP) are disordered. Low complexity predominate over residues 93–105 (STRATAASSASAR).

Its function is as follows. Binds chitin. Has antifungal activity against the fungi F.solani (IC(50)=5 ug/ml), F.verticillioides (IC(50)=30 ug/ml), F.oxysporum (IC(50)=5 ug/ml), B.sorokiniana (IC(50)=5 ug/ml), B.cinerea (IC(50)=20 ug/ml) and N.crassa (IC(50)=10 ug/ml). Inhibits hyphal elongation and causes browning of hyphae in F.oxysporum. Causes destruction and discoloration of spores in B.sorokiniana. Inhibits the development of disease caused by the fungus P.infestans on potato tubers. Has antibacterial activity against the Gram-negative bacteria P.syringae and E.carotovora, and the Gram-positive bacterium C.michiganensis. In terms of biological role, has antifungal activity against F.verticillioides (IC(50)=2.7 ug/ml). At concentrations between 45 uM and 225 uM, inhibits activity of metalloproteinase fungalysin Fv-cpm from F.verticillioides. The polypeptide is Antimicrobial peptide 1b (Triticum kiharae (Wheat)).